Here is a 1943-residue protein sequence, read N- to C-terminus: Protocadherin-15 (1943 aa).

The signal sequence occupies residues 1-26 (MFLQFAVWKCLPHGILIASLLVVSWG). Topologically, residues 27-1381 (QYDDDWQYED…GESLGYTEGA (1355 aa)) are extracellular. A disulfide bond links Cys37 and Cys125. 11 Cadherin domains span residues 45–152 (PATI…SPTF), 153–270 (KHES…GPMF), 283–400 (RPLT…SPYF), 401–514 (TMPS…TPTF), 515–621 (PEIS…PPRF), 622–722 (PQLM…APVF), 724–824 (PYLP…SPVF), 825–931 (TNST…PPVF), 932–1040 (SKRI…IPRF), 1042–1149 (QEEY…PPVF), and 1150–1264 (QKKF…PPTL). N-linked (GlcNAc...) asparagine glycosylation is found at Asn57, Asn102, and Asn206. Residues Asn424, Asn564, Asn667, Asn729, Asn773, Asn826, and Asn856 are each glycosylated (N-linked (GlcNAc...) asparagine). N-linked (GlcNAc...) asparagine glycosylation is found at Asn1069, Asn1089, and Asn1180. A helical transmembrane segment spans residues 1382–1402 (LLALAFIIILCCIPAILVVLV). The Cytoplasmic portion of the chain corresponds to 1403–1943 (SYRQFKVRQA…VQPHSQSTSL (541 aa)). Disordered stretches follow at residues 1425 to 1453 (PAAKPAAPVPAAPAPPPPPPPPPPGAHLY), 1475 to 1533 (GNNS…STHN), and 1714 to 1865 (ILNS…EPHR). Over residues 1431 to 1449 (APVPAAPAPPPPPPPPPPG) the composition is skewed to pro residues. Basic and acidic residues-rich tracts occupy residues 1480-1489 (PEDRSSHRDG) and 1498-1509 (ESHEPAHVEGPL). 2 stretches are compositionally biased toward pro residues: residues 1742–1760 (PHPPSISAPLPHPPLPRPP) and 1769–1779 (PLSPPNPPPPQ). The segment covering 1784-1795 (SLPISTPPTSSL) has biased composition (low complexity). The segment covering 1796–1821 (PLPPPLSLPPPPRPPAPRLFPQPPST) has biased composition (pro residues). Over residues 1822–1834 (SIPSTDSISAPAA) the composition is skewed to low complexity. A compositionally biased stretch (polar residues) spans 1846 to 1858 (TTSTTQPPASNPQ).

As to quaternary structure, antiparallel heterodimer with CDH23. Found in a complex with TMIE and LHFPL5. Interacts with LHFPL5/TMHS; this interaction is required for efficient localization to hair bundles. Interacts with MYO7A. Interacts with USH1G; this interaction may recruit USH1G to the plasma membrane. Interacts with TOMT. Isoforms CD1 and CD3 interact with TMC1 (via N-terminus) and TMC2 (via N-terminus). Interacts with PIEZO1. Expressed in brain and sensory epithelium of the developing inner ear. Expressed in the retina, in the photoreceptor inner segments, the outer plexiform layer, the inner nuclei layer and the ganglion cell layer and, more diffusely in the inner plexiform layer (at protein level). Not detected in the retinal pigment epithelium (at protein level). Expressed in the spleen, dorsal root ganglion, dorsal aspect of neural tube, floor plate and ependymal cells adjacent to the neural canal.

The protein resides in the cell membrane. Its subcellular location is the secreted. Functionally, calcium-dependent cell-adhesion protein. Required for inner ear neuroepithelial cell elaboration and cochlear function. Probably involved in the maintenance of normal retinal function. This is Protocadherin-15 (Pcdh15) from Mus musculus (Mouse).